Consider the following 535-residue polypeptide: uncharacterized protein (535 aa).

The tract at residues 1–34 is disordered; it reads MKAIDNQIRNISSSHQDKHSDKVNSHQHHGKVDK. Residues 15-34 are compositionally biased toward basic and acidic residues; it reads HQDKHSDKVNSHQHHGKVDK.

This is an uncharacterized protein from Escherichia coli (strain K12).